Consider the following 782-residue polypeptide: E3 ubiquitin-protein ligase SopA (782 aa).

The disordered stretch occupies residues 137-171 (VSVSANNRPTVSEGRTPPVSPSLSLQATSSPSSPA). Over residues 157-171 (PSLSLQATSSPSSPA) the composition is skewed to low complexity. The active-site Glycyl thioester intermediate is C753.

The protein belongs to the SopA E3 ligase family. In terms of processing, ubiquitinated in the presence of host E1 ubiquitin-activating enzyme, E2 ubiquitin-conjugating enzyme and ubiquitin.

The protein localises to the secreted. The protein resides in the host cell. The catalysed reaction is S-ubiquitinyl-[E2 ubiquitin-conjugating enzyme]-L-cysteine + [acceptor protein]-L-lysine = [E2 ubiquitin-conjugating enzyme]-L-cysteine + N(6)-ubiquitinyl-[acceptor protein]-L-lysine.. In terms of biological role, effector proteins function to alter host cell physiology and promote bacterial survival in host tissues. This protein is an E3 ubiquitin ligase that interferes with host's ubiquitination pathway. The protein is E3 ubiquitin-protein ligase SopA (sopA) of Salmonella dublin (strain CT_02021853).